The primary structure comprises 535 residues: Light-independent protochlorophyllide reductase subunit B (535 aa).

D36 contacts [4Fe-4S] cluster. The Proton donor role is filled by D287. Position 422-423 (422-423) interacts with substrate; it reads GL.

It belongs to the ChlB/BchB/BchZ family. In terms of assembly, protochlorophyllide reductase is composed of three subunits; BchL, BchN and BchB. Forms a heterotetramer of two BchB and two BchN subunits. The cofactor is [4Fe-4S] cluster.

It catalyses the reaction chlorophyllide a + oxidized 2[4Fe-4S]-[ferredoxin] + 2 ADP + 2 phosphate = protochlorophyllide a + reduced 2[4Fe-4S]-[ferredoxin] + 2 ATP + 2 H2O. It participates in porphyrin-containing compound metabolism; bacteriochlorophyll biosynthesis (light-independent). Component of the dark-operative protochlorophyllide reductase (DPOR) that uses Mg-ATP and reduced ferredoxin to reduce ring D of protochlorophyllide (Pchlide) to form chlorophyllide a (Chlide). This reaction is light-independent. The NB-protein (BchN-BchB) is the catalytic component of the complex. In Rhodopseudomonas palustris (strain BisB5), this protein is Light-independent protochlorophyllide reductase subunit B.